Reading from the N-terminus, the 666-residue chain is MIKLLKPMSLSILLVFILSFSFPFPTAKAAANDNNVEWNGLFHDQGPLFDNAPEPTSTQSVTLKLRTFKGDITSANIKYWDTADNAFHWVPMVWDSNDPTGTFDYWKGTIPASPSIKYYRFQINDGTSTAWYNGNGPSSTEPNADDFYIIPNFKTPDWLKNGVMYQIFPDRFYNGDSSNDVQTGSYTYNGTPTEKKAWGSSVYADPGYDNSLVFFGGDLAGIDQKLGYIKKTLGANILYLNPIFKAPTNHKYDTQDYMAVDPAFGDNSTLQTLINDIHSTANGPKGYLILDGVFNHTGDSHPWFDKYNNFSSQGAYESQSSPWYNYYTFYTWPDSYASFLGFNSLPKLNYGNSGSAVRGVIYNNSNSVAKTYLNPPYSVDGWRLDAAQYVDANGNNGSDVTNHQIWSEFRNAVKGVNSNAAIIGEYWGNANPWTAQGNQWDAATNFDGFTQPVSEWITGKDYQNNSASISTTQFDSWLRGTRANYPTNVQQSMMNFLSNHDITRFATRSGGDLWKTYLALIFQMTYVGTPTIYYGDEYGMQGGADPDNRRSFDWSQATPSNSAVALTQKLITIRNQYPALRTGSFMTLITDDTNKIYSYGRFDNVNRIAVVLNNDSVSHTVNVPVWQLSMPNGSTVTDKITGHSYTVQNGMVTVAVDGHYGAVLAQ.

The first 29 residues, 1–29, serve as a signal peptide directing secretion; it reads MIKLLKPMSLSILLVFILSFSFPFPTAKA. Residues Ala-31, Asp-33, Asn-35, Asp-71, Asp-125, Asn-174, Asp-176, Asn-179, Asp-180, Gly-216, and Asp-218 each contribute to the Ca(2+) site. His-296 provides a ligand contact to substrate. Positions 305, 309, 310, 312, and 317 each coordinate Ca(2+). A substrate-binding site is contributed by Arg-383. The Nucleophile role is filled by Asp-385. Glu-425 serves as the catalytic Proton donor. Substrate-binding positions include 500–501, Asp-545, and Arg-549; that span reads HD.

This sequence belongs to the glycosyl hydrolase 13 family. Ca(2+) serves as cofactor.

The protein localises to the secreted. The catalysed reaction is Hydrolysis of pullulan to panose (6-alpha-D-glucosylmaltose).. Its function is as follows. Endohydrolysis of 1,4-alpha-glucosidic linkages in pullulan to form panose. Also hydrolyzes cyclodextrins. The sequence is that of Neopullulanase 1 (tvaI) from Thermoactinomyces vulgaris.